A 76-amino-acid chain; its full sequence is DNA-directed RNA polymerase subunit epsilon (76 aa).

This sequence belongs to the RNA polymerase subunit epsilon family. RNAP is composed of a core of 2 alpha, a beta and a beta' subunit. The core is associated with a delta subunit, and at least one of epsilon or omega. When a sigma factor is associated with the core the holoenzyme is formed, which can initiate transcription.

It carries out the reaction RNA(n) + a ribonucleoside 5'-triphosphate = RNA(n+1) + diphosphate. Its function is as follows. A non-essential component of RNA polymerase (RNAP). This is DNA-directed RNA polymerase subunit epsilon from Lactococcus lactis subsp. lactis (strain IL1403) (Streptococcus lactis).